A 231-amino-acid polypeptide reads, in one-letter code: Large ribosomal subunit protein uL1 (231 aa).

The protein belongs to the universal ribosomal protein uL1 family. Part of the 50S ribosomal subunit.

Its function is as follows. Binds directly to 23S rRNA. The L1 stalk is quite mobile in the ribosome, and is involved in E site tRNA release. In terms of biological role, protein L1 is also a translational repressor protein, it controls the translation of the L11 operon by binding to its mRNA. This chain is Large ribosomal subunit protein uL1, found in Acinetobacter baumannii (strain AB307-0294).